The chain runs to 1194 residues: Metabotropic glutamate receptor 1 (1194 aa).

The signal sequence occupies residues 1–18 (MVGLLLFFFPAIFLEVSL). Topologically, residues 19–592 (LPRSPGRKVL…VRYLEWSNIE (574 aa)) are extracellular. A disulfide bridge links cysteine 67 with cysteine 109. Tyrosine 74 lines the L-glutamate pocket. N-linked (GlcNAc...) asparagine glycosylation occurs at asparagine 98. L-glutamate is bound by residues serine 165 and 186 to 188 (SAT). Residue asparagine 223 is glycosylated (N-linked (GlcNAc...) asparagine). L-glutamate is bound at residue tyrosine 236. A disulfide bridge links cysteine 289 with cysteine 291. Residue aspartate 318 participates in L-glutamate binding. Cysteine 378 and cysteine 394 are joined by a disulfide. Asparagine 397 is a glycosylation site (N-linked (GlcNAc...) asparagine). Residue lysine 409 coordinates L-glutamate. Cysteine 432 and cysteine 439 are disulfide-bonded. Asparagine 515 carries an N-linked (GlcNAc...) asparagine glycan. The helical transmembrane segment at 593 to 615 (SIIAIAFSCLGILVTLFVTLIFV) threads the bilayer. Residues 616–629 (LYRDTPVVKSSSRE) are Cytoplasmic-facing. A helical transmembrane segment spans residues 630 to 650 (LCYIILAGIFLGYVCPFTLIA). The Extracellular portion of the chain corresponds to 651 to 658 (KPTTTSCY). The cysteines at positions 657 and 746 are disulfide-linked. The helical transmembrane segment at 659-680 (LQRLLVGLSSAMCYSALVTKTN) threads the bilayer. Residues 681–703 (RIARILAGSKKKICTRKPRFMSA) lie on the Cytoplasmic side of the membrane. The chain crosses the membrane as a helical span at residues 704–727 (WAQVIIASILISVQLTLVVTLIIM). Residues 728 to 750 (EPPMPILSYPSIKEVYLICNTSN) are Extracellular-facing. Residues 751 to 772 (LGVVAPLGYNGLLIMSCTYYAF) traverse the membrane as a helical segment. The Cytoplasmic segment spans residues 773–785 (KTRNVPANFNEAK). Residues 786 to 807 (YIAFTMYTTCIIWLAFVPIYFG) form a helical membrane-spanning segment. The Extracellular segment spans residues 808-815 (SNYKIITT). The chain crosses the membrane as a helical span at residues 816–840 (CFAVSLSVTVALGCMFTPKMYIIIA). At 841-1194 (KPERNVRSAF…RDYKQSSSTL (354 aa)) the chain is on the cytoplasmic side. Position 853 is a phosphoserine (serine 853). The residue at position 871 (threonine 871) is a Phosphothreonine. The tract at residues 883-905 (AGNANSNGKSVSWSEPGGGQVPK) is disordered. A compositionally biased stretch (polar residues) spans 885-895 (NANSNGKSVSW). Residues serine 894 and serine 969 each carry the phosphoserine modification. A disordered region spans residues 1007 to 1030 (PALPKGLPPPLQQQQQPPPQQKSL). Residues 1012–1026 (GLPPPLQQQQQPPPQ) are compositionally biased toward pro residues. The residue at position 1091 (serine 1091) is a Phosphoserine. Positions 1113-1173 (HEREGNTEED…SPVSESVLCT (61 aa)) are disordered. The segment covering 1119-1131 (TEEDELEEEEEDL) has biased composition (acidic residues). Serine 1142 bears the Phosphoserine mark. The residue at position 1146 (threonine 1146) is a Phosphothreonine. Serine 1149 is subject to Phosphoserine. Residues 1154-1170 (SVASGSSVPSSPVSESV) show a composition bias toward low complexity.

It belongs to the G-protein coupled receptor 3 family. Homodimer; disulfide-linked. The PPXXF motif binds HOMER1, HOMER2 and HOMER3. Interacts with TAMALIN. Interacts with RYR1, RYR2, ITPR1, SHANK1 and SHANK3. Interacts with SIAH1. As to expression, detected in brain.

It is found in the cell membrane. It localises to the postsynaptic cell membrane. The protein resides in the cell projection. The protein localises to the dendrite. Its activity is regulated as follows. Signaling is inhibited by the antagonist LY341495. The LY341495 binding site partially overlaps with the glutamate binding site. Signaling is also inhibited by synthetic allosteric regulators, such as FITM (4-fluoro-N-(4-(6-(isopropylamino)pyrimidin-4-yl)thiazol-2-yl)-N-methylbenzamide) that bind in a pocket between the transmembrane helices. Its function is as follows. G-protein coupled receptor for glutamate. Ligand binding causes a conformation change that triggers signaling via guanine nucleotide-binding proteins (G proteins) and modulates the activity of down-stream effectors. Signaling activates a phosphatidylinositol-calcium second messenger system. May participate in the central action of glutamate in the CNS, such as long-term potentiation in the hippocampus and long-term depression in the cerebellum. May function in the light response in the retina. Induces GRID1 and GRID2 cation-channel activation via GNAQ-PLC-PKC pathway in dopaminergic neurons and cerebellar Purkinje cell, respectively. This chain is Metabotropic glutamate receptor 1 (GRM1), found in Homo sapiens (Human).